The sequence spans 204 residues: Protein GrpE (204 aa).

Residues 1–42 (MTDETAKNGPDAAADAQIEPQVQEETNSTAEDAGQDNNPTAA) form a disordered region. Over residues 23–41 (QEETNSTAEDAGQDNNPTA) the composition is skewed to polar residues.

This sequence belongs to the GrpE family. In terms of assembly, homodimer.

It is found in the cytoplasm. Participates actively in the response to hyperosmotic and heat shock by preventing the aggregation of stress-denatured proteins, in association with DnaK and GrpE. It is the nucleotide exchange factor for DnaK and may function as a thermosensor. Unfolded proteins bind initially to DnaJ; upon interaction with the DnaJ-bound protein, DnaK hydrolyzes its bound ATP, resulting in the formation of a stable complex. GrpE releases ADP from DnaK; ATP binding to DnaK triggers the release of the substrate protein, thus completing the reaction cycle. Several rounds of ATP-dependent interactions between DnaJ, DnaK and GrpE are required for fully efficient folding. The protein is Protein GrpE of Allorhizobium ampelinum (strain ATCC BAA-846 / DSM 112012 / S4) (Agrobacterium vitis (strain S4)).